The sequence spans 322 residues: MLRIANEERPWVEILPTQGATIGELTLSMQQYPVQQGTLFTINYHNELGRVWIAEQCWQRWCEGLIGTANRSAIDPELLYGIAEWGLAPLLQASDATLCQNEPPTSCSNLPHQLALHIKWTVEEHEFHSIIFTWPTGFLRNIVGELSAERQQIYPAPPVVVPVYSGWCQLTLIELESIEIGMGVRIHCFGDIRLGFFAIQLPGGIYARVLLTEDNTMKFDELVQDIETLLASGSPMSKSDGTSSVELEQIPQQVLFEVGRASLEIGQLRQLKTGDVLPVGGCFAPEVTIRVNDRIIGQGELIACGNEFMVRITRWYLCKNTA.

The protein belongs to the FliN/MopA/SpaO family.

Functionally, part of a type III secretion system. In Salmonella typhimurium (strain LT2 / SGSC1412 / ATCC 700720), this protein is Secretion system apparatus protein SsaQ (ssaQ).